The chain runs to 827 residues: Spastin (827 aa).

Residues 1–13 (MVRNKYTLTTAGK) are compositionally biased toward polar residues. The interval 1-58 (MVRNKYTLTTAGKSPSKKSRTGSLSKQHDATGDDDGETGTLDGSGSAAGSPVGGGTDA) is disordered. Residues 1–79 (MVRNKYTLTT…KQNLYIISFP (79 aa)) are Cytoplasmic-facing. Residues 38–50 (TGTLDGSGSAAGS) are compositionally biased toward low complexity. An intramembrane region (helical) is located at residues 80–100 (VIFVFNVLRSLLYQLFIVFRY). The Cytoplasmic portion of the chain corresponds to 101 to 827 (VYNFTTKVVY…WLQDFGDVTL (727 aa)). Disordered stretches follow at residues 127–190 (QHGH…AHPL) and 207–229 (SIQRSASGSQVGPGDPLLAKQKH). Residues 129-141 (GHHHHHHHRHSSH) are compositionally biased toward basic residues. The segment covering 142 to 190 (SIHSTAAAHQLQQHQQQQQHQYSLLQQEQHGVTEPQQQQQQQHQAAHPL) has biased composition (low complexity). In terms of domain architecture, MIT spans 231–306 (HRRAFEYISK…SMARDRLQFL (76 aa)). Disordered regions lie at residues 358–381 (HHPARGTAASSRPTTAATAPATPS), 398–433 (VGYKRPGNLGVMNKSQTLPRSMGGTRTTPTGTGGAG), and 476–526 (VSIP…PQIS). Low complexity predominate over residues 364-381 (TAASSRPTTAATAPATPS). Composition is skewed to low complexity over residues 476 to 486 (VSIPIPGSSPV) and 510 to 524 (QQPQQPQQQQQQQPQ). ATP is bound at residue 592–599 (GPPGNGKT).

It belongs to the AAA ATPase family. Spastin subfamily. In terms of assembly, homohexamer. The homohexamer is stabilized by ATP-binding. The homohexamer may adopt a ring conformation through which microtubules pass prior to being severed. Interacts with microtubules.

It is found in the membrane. Its subcellular location is the cytoplasm. The protein resides in the cytoskeleton. It localises to the microtubule organizing center. The protein localises to the centrosome. It catalyses the reaction n ATP + n H2O + a microtubule = n ADP + n phosphate + (n+1) alpha/beta tubulin heterodimers.. In terms of biological role, ATP-dependent microtubule severing protein. Microtubule severing may promote reorganization of cellular microtubule arrays and the release of microtubules from the microtubule organizing center following nucleation. The protein is Spastin (spas) of Anopheles gambiae (African malaria mosquito).